The primary structure comprises 536 residues: MFRYHSILLLAILYFFEYGLAYKILVFSPATSKSHLISNGRIADELAKAGHNVTLLEIDFLGIVDSTKSAKLVKKTIVRVPKKMQGFKNVIQSFSEGVMEDEGLFELLKGNIAYQTVYNDLCEEFLENEVMFNKLKDENFDAFFAEQLNICGFGYAKALGIQRKFLISSCPFFSHVYDYTSHPAPYASVPFISDMSPEPTYLERTNNLLRGITINTFFYFSHNRLTSIFRKKFGDDFPAITEIVRNVDIIFLATDEIIDFSSPTLPNLVHVGGLGVDDDTTEMGPVFEAEMKKGDKGVIYFSLGTIANTSTIDKKVMESFLEIVKKFPDYHFLIRADKNDKNTKDKATEISNVFVSDWLPQPAILHHPRLRTFITHAGYNGLMEAALAGVPLITIPFMFDQNLNSRAIEKKGWGIRRDKKQFLTEPNAIEEAIREMLTNPSYTKQAHRVRDLMRNKPMGARDRFIKTTEWVIQNGGVHELLTEGRDLSIIKYYNLDIIVPCFFVAFYFIIFPFFKLFGGFYYYSCFGHIESKYKKD.

The N-terminal stretch at 1–21 (MFRYHSILLLAILYFFEYGLA) is a signal peptide. Asparagine 52 and asparagine 308 each carry an N-linked (GlcNAc...) asparagine glycan. Residues 497–517 (IIVPCFFVAFYFIIFPFFKLF) form a helical membrane-spanning segment.

The protein belongs to the UDP-glycosyltransferase family.

The protein localises to the membrane. It carries out the reaction glucuronate acceptor + UDP-alpha-D-glucuronate = acceptor beta-D-glucuronoside + UDP + H(+). This Caenorhabditis elegans protein is Putative UDP-glucuronosyltransferase ugt-47 (ugt-47).